The sequence spans 134 residues: Putative transposase InsN for insertion sequence element IS911A (134 aa).

It belongs to the transposase 8 family.

In terms of biological role, involved in the transposition of the insertion sequence IS911. This Escherichia coli (strain K12) protein is Putative transposase InsN for insertion sequence element IS911A (insN1).